The chain runs to 372 residues: Small ribosomal subunit protein mS77 (rPPR2) (372 aa).

The transit peptide at 1-28 (MKSFLLSRQAIHRISLLSSKTPTFCRNF) directs the protein to the mitochondrion. A disordered region spans residues 240–265 (DNSIRESETVDGEVEEEGFVPSDEVE). Acidic residues predominate over residues 248 to 257 (TVDGEVEEEG).

In terms of assembly, component of the mitochondrial ribosome small subunit.

Its subcellular location is the mitochondrion. Required for karyogamy during female gametophyte development, when the two polar nuclei fuse to form the diploid central cell nucleus. This Arabidopsis thaliana (Mouse-ear cress) protein is Small ribosomal subunit protein mS77 (rPPR2).